The following is a 120-amino-acid chain: Prefoldin subunit beta (120 aa).

Belongs to the prefoldin subunit beta family. In terms of assembly, heterohexamer of two alpha and four beta subunits.

The protein localises to the cytoplasm. Functionally, molecular chaperone capable of stabilizing a range of proteins. Seems to fulfill an ATP-independent, HSP70-like function in archaeal de novo protein folding. The chain is Prefoldin subunit beta from Methanothrix thermoacetophila (strain DSM 6194 / JCM 14653 / NBRC 101360 / PT) (Methanosaeta thermophila).